The sequence spans 476 residues: mRNA-capping enzyme subunit beta (476 aa).

A disordered region spans residues 1-133 (MNVGSILNDE…KLKSTNKPRR (133 aa)). Composition is skewed to basic and acidic residues over residues 51–67 (LKTK…EHSN) and 105–114 (HPIEQDKSEK). Positions 123-132 (SKLKSTNKPR) are enriched in basic residues.

It belongs to the fungal TPase family. Heterodimer. The mRNA-capping enzyme is composed of two separate chains alpha and beta, respectively a mRNA guanylyltransferase and an mRNA 5'-triphosphate monophosphatase. The cofactor is Mg(2+).

The protein resides in the nucleus. It catalyses the reaction a 5'-end triphospho-ribonucleoside in mRNA + H2O = a 5'-end diphospho-ribonucleoside in mRNA + phosphate + H(+). Its function is as follows. First step of mRNA capping. Converts the 5'-triphosphate end of a nascent mRNA chain into a diphosphate end. The polypeptide is mRNA-capping enzyme subunit beta (CET1) (Debaryomyces hansenii (strain ATCC 36239 / CBS 767 / BCRC 21394 / JCM 1990 / NBRC 0083 / IGC 2968) (Yeast)).